A 587-amino-acid polypeptide reads, in one-letter code: MTHAPTPPAASNFLRPIIEDDLQANRFQGKLWAGKPGPAALQAQGQPDPARIRTRFPPEPNGYLHIGHAKSICVNFGLARDYGGVCHLRFDDTNPEKEEQEYVDAIIEAVHWLGFDWQADGNDNLYFASDYFEFMYEFAEALVQAGHAYVDEQSAEEIRASRGTLTEPGTDSPWRDRPADESLLRLREMRDGKHPDGSLVLRARIDMASPNINLRDPVMYRVRHATHHRTGNAWCIYPMYSWAHPVEDALEGITHSICTLEFEDQRPFYDWILARLAELGKLARPLPHQYEFARLNLTYVVTSKRKLLQLVREGYVDGWDDPRMPTLFGLRRRGYTPSSIRLFCDRTAVSKSDSRIDYSLLEQAVRDDLDPVAPRSVAVLDPLKLVITNYPEGRSETCSAPRNPHDPQAGVREFPFTRELWIEQDDFREEPPKKYFRLFPGNTVRLKYGYVVRCTGFTKDESGKVVEVQAEYLPDTKSGTPGADSVKVKGNITWVSAAHAVPAQVHLYDRLFADAHPDGGDKDFLACLNPNSKQTVQAWLEPGIEAVPGATWQFERLGYFTVDSKDSRPEAPVLNRIVTLRDSWQAA.

Residues 58-68 carry the 'HIGH' region motif; it reads PEPNGYLHIGH. ATP contacts are provided by residues 59 to 61 and 65 to 71; these read EPN and HIGHAKS. Residues Asp-91 and Tyr-240 each contribute to the L-glutamine site. Residues Thr-259 and 294 to 295 each bind ATP; that span reads RL. Positions 301–305 match the 'KMSKS' region motif; sequence VTSKR.

The protein belongs to the class-I aminoacyl-tRNA synthetase family. As to quaternary structure, monomer.

It localises to the cytoplasm. It catalyses the reaction tRNA(Gln) + L-glutamine + ATP = L-glutaminyl-tRNA(Gln) + AMP + diphosphate. The sequence is that of Glutamine--tRNA ligase from Bordetella pertussis (strain Tohama I / ATCC BAA-589 / NCTC 13251).